Here is a 1453-residue protein sequence, read N- to C-terminus: MFSFVDLRLLLLLGATALLTHGQEDIPEVSCIHNGLRVPNGETWKPEVCLICICHNGTAVCDDVQCNEELDCPNPQRREGECCAFCPEEYVSPNSEDVGVEGPKGDPGPQGPRGPVGPPGRDGIPGQPGLPGPPGPPGPPGPPGLGGNFASQMSYGYDEKSAGVSVPGPMGPSGPRGLPGPPGAPGPQGFQGPPGEPGEPGGSGPMGPRGPPGPPGKNGDDGEAGKPGRPGERGPPGPQGARGLPGTAGLPGMKGHRGFSGLDGAKGDAGPAGPKGEPGSPGENGAPGQMGPRGLPGERGRPGPPGTAGARGNDGAVGAAGPPGPTGPTGPPGFPGAVGAKGEAGPQGARGSEGPQGVRGEPGPPGPAGAAGPAGNPGADGQPGAKGANGAPGIAGAPGFPGARGPSGPQGPSGPPGPKGNSGEPGAPGNKGDTGAKGEPGATGVQGPPGPAGEEGKRGARGEPGPSGLPGPPGERGGPGSRGFPGADGVAGPKGPSGERGAPGPAGPKGSPGEAGRPGEAGLPGAKGLTGSPGSPGPDGKTGPPGPAGQDGRPGPAGPPGARGQAGVMGFPGPKGTAGEPGKAGERGLPGPPGAVGPAGKDGEAGAQGAPGPAGPAGERGEQGPAGSPGFQGLPGPAGPPGEAGKPGEQGVPGDLGAPGPSGARGERGFPGERGVQGPPGPAGPRGNNGAPGNDGAKGDTGAPGAPGSQGAPGLQGMPGERGAAGLPGPKGDRGDAGPKGADGSPGKDGARGLTGPIGPPGPAGAPGDKGEAGPSGPPGPTGARGAPGDRGEAGPPGPAGFAGPPGADGQPGAKGEPGDTGVKGDAGPPGPAGPAGPPGPIGNVGAPGPKGPRGAAGPPGATGFPGAAGRVGPPGPSGNAGPPGPPGPVGKEGGKGPRGETGPAGRPGEVGPPGPPGPAGEKGSPGADGPAGSPGTPGPQGIAGQRGVVGLPGQRGERGFPGLPGPSGEPGKQGPSGSSGERGPPGPMGPPGLAGPPGESGREGSPGAEGSPGRDGAPGAKGDRGETGPAGPPGAPGAPGAPGPVGPAGKNGDRGETGPAGPAGPIGPAGARGPAGPQGPRGDKGETGEQGDRGIKGHRGFSGLQGPPGSPGSPGEQGPSGASGPAGPRGPPGSAGSPGKDGLNGLPGPIGPPGPRGRTGDSGPAGPPGPPGPPGPPGPPSGGYDFSFLPQPPQEKSQDGGRYYRADDANVVRDRDLEVDTTLKSLSQQIENIRSPEGSRKNPARTCRDLKMCHSDWKSGEYWIDPNQGCNLDAIKVYCNMETGQTCVFPTQPSVPQKNWYISPNPKEKKHVWFGESMTDGFPFEYGSEGSDPADVAIQLTFLRLMSTEASQNITYHCKNSVAYMDQQTGNLKKALLLQGSNEIELRGEGNSRFTYSTLVDGCTSHTGTWGKTVIEYKTTKTSRLPIIDVAPLDIGAPDQEFGLDIGPACFV.

The N-terminal stretch at 1 to 22 (MFSFVDLRLLLLLGATALLTHG) is a signal peptide. A propeptide spans 23–151 (QEDIPEVSCI…PPGLGGNFAS (129 aa)) (N-terminal propeptide). The region spanning 29–87 (VSCIHNGLRVPNGETWKPEVCLICICHNGTAVCDDVQCNEELDCPNPQRREGECCAFCP) is the VWFC domain. N-linked (GlcNAc...) asparagine glycosylation is present at Asn56. A disordered region spans residues 94–1210 (NSEDVGVEGP…GGRYYRADDA (1117 aa)). Composition is skewed to pro residues over residues 109–118 (PQGPRGPVGP) and 128–143 (PGLP…PGPP). A nonhelical region (N-terminal) region spans residues 152-167 (QMSYGYDEKSAGVSVP). At Lys160 the chain carries Allysine. Ser161 is subject to Phosphoserine. Residues 168 to 1181 (GPMGPSGPRG…PGPPGPPGPP (1014 aa)) form a triple-helical region region. A 4-hydroxyproline mark is found at Pro179, Pro182, Pro185, Pro194, Pro197, Pro200, Pro215, Pro230, Pro236, Pro245, and Pro251. The segment covering 198 to 207 (GEPGGSGPMG) has biased composition (gly residues). Positions 218 to 232 (NGDDGEAGKPGRPGE) are enriched in basic and acidic residues. Position 254 is a 5-hydroxylysine; alternate (Lys254). Residue Lys254 is glycosylated (O-linked (Gal...) hydroxylysine; alternate). The residue at position 260 (Ser260) is a Phosphoserine. Low complexity predominate over residues 268–284 (DAGPAGPKGEPGSPGEN). 5 positions are modified to 4-hydroxyproline: Pro278, Pro281, Pro287, Pro296, and Pro302. Residues 307 to 320 (TAGARGNDGAVGAA) show a composition bias toward low complexity. Residues 322–334 (PPGPTGPTGPPGF) show a composition bias toward pro residues. 11 positions are modified to 4-hydroxyproline: Pro323, Pro332, Pro335, Pro362, Pro365, Pro377, Pro383, Pro392, Pro398, Pro401, and Pro416. Low complexity predominate over residues 368-407 (AGAAGPAGNPGADGQPGAKGANGAPGIAGAPGFPGARGPS). Position 419 is a 5-hydroxylysine (Lys419). Residues Pro425, Pro428, Pro440, Pro449, Pro464, Pro470, Pro479, and Pro485 each carry the 4-hydroxyproline modification. The span at 474–483 (GERGGPGSRG) shows a compositional bias: gly residues. Residue Lys494 is modified to 5-hydroxylysine. Positions 499-515 (ERGAPGPAGPKGSPGEA) are enriched in low complexity. Residues Pro503, Pro512, Pro518, Pro524, Pro533, Pro536, Pro545, Pro554, Pro560, Pro572, Pro581, Pro590, Pro593, Pro611, Pro629, Pro635, Pro641, Pro647, Pro653, Pro659, Pro671, Pro680, Pro692, Pro704, Pro707, Pro713, Pro719, and Pro728 each carry the 4-hydroxyproline modification. Over residues 527–566 (KGLTGSPGSPGPDGKTGPPGPAGQDGRPGPAGPPGARGQA) the composition is skewed to low complexity. Low complexity predominate over residues 623–650 (QGPAGSPGFQGLPGPAGPPGEAGKPGEQ). Composition is skewed to low complexity over residues 685 to 695 (PRGNNGAPGND) and 703 to 716 (APGA…PGLQ). A Cell attachment site motif is present at residues 734–736 (RGD). The residue at position 740 (Lys740) is a 5-hydroxylysine. 3 positions are modified to 4-hydroxyproline: Pro746, Pro761, and Pro767. Ser776 carries the phosphoserine modification. 4-hydroxyproline occurs at positions 788, 797, 806, 812, 830, 839, and 848. The segment covering 800-815 (AGFAGPPGADGQPGAK) has biased composition (low complexity). Positions 829-841 (PPGPAGPAGPPGP) are enriched in pro residues. The segment covering 842 to 872 (IGNVGAPGPKGPRGAAGPPGATGFPGAAGRV) has biased composition (low complexity). At Lys851 the chain carries 5-hydroxylysine. 4-hydroxyproline occurs at positions 860 and 866. Pro874 is modified (3-hydroxyproline). Pro875, Pro884, Pro887, Pro908, Pro917, Pro926, Pro935, Pro953, Pro962, Pro965, Pro971, Pro986, Pro992, Pro998, Pro1007, and Pro1013 each carry 4-hydroxyproline. The segment covering 901–910 (ETGPAGRPGE) has biased composition (low complexity). The span at 920–935 (AGEKGSPGADGPAGSP) shows a compositional bias: low complexity. A compositionally biased stretch (pro residues) spans 985–995 (PPGPMGPPGLA). Residues 997-1012 (PPGESGREGSPGAEGS) are compositionally biased toward low complexity. Position 1022 is a 5-hydroxylysine (Lys1022). Positions 1031 to 1046 (AGPPGAPGAPGAPGPV) are enriched in pro residues. Pro1034, Pro1037, and Pro1040 each carry 4-hydroxyproline. The span at 1067-1081 (IGPAGARGPAGPQGP) shows a compositional bias: low complexity. The Cell attachment site signature appears at 1082–1084 (RGD). A compositionally biased stretch (basic and acidic residues) spans 1082–1096 (RGDKGETGEQGDRGI). 5-hydroxylysine is present on Lys1085. Lys1097 carries the 5-hydroxylysine; alternate modification. Lys1097 carries O-linked (Gal...) hydroxylysine; alternate glycosylation. The span at 1102-1148 (FSGLQGPPGSPGSPGEQGPSGASGPAGPRGPPGSAGSPGKDGLNGLP) shows a compositional bias: low complexity. 4-hydroxyproline is present on residues Pro1109, Pro1112, Pro1115, Pro1133, and Pro1148. Position 1153 is a 3-hydroxyproline (Pro1153). Pro1154 carries the 4-hydroxyproline modification. Residues 1166 to 1181 (AGPPGPPGPPGPPGPP) show a composition bias toward pro residues. At Pro1168 the chain carries 3-hydroxyproline. 4-hydroxyproline is present on Pro1169. Pro1171 is subject to 3-hydroxyproline. Pro1172 carries the post-translational modification 4-hydroxyproline. The residue at position 1174 (Pro1174) is a 3-hydroxyproline. A 4-hydroxyproline mark is found at Pro1175, Pro1178, and Pro1181. Residues 1182–1207 (SGGYDFSFLPQPPQEKSQDGGRYYRA) are nonhelical region (C-terminal). Lys1197 carries the allysine modification. Basic and acidic residues predominate over residues 1197 to 1210 (KSQDGGRYYRADDA). A propeptide spans 1208-1453 (DDANVVRDRD…GLDIGPACFV (246 aa)) (C-terminal propeptide). In terms of domain architecture, Fibrillar collagen NC1 spans 1218–1453 (LEVDTTLKSL…GLDIGPACFV (236 aa)). Cystine bridges form between Cys1248-Cys1280, Cys1288-Cys1451, and Cys1359-Cys1404. 5 residues coordinate Ca(2+): Asp1266, Asn1268, Gln1269, Cys1271, and Asp1274. N-linked (GlcNAc...) asparagine glycosylation occurs at Asn1354.

Belongs to the fibrillar collagen family. As to quaternary structure, trimers of one alpha 2(I) and two alpha 1(I) chains. Interacts with MRC2. Interacts with TRAM2. Interacts with MFAP4 in a Ca (2+)-dependent manner. Contains mostly 4-hydroxyproline. Proline residues at the third position of the tripeptide repeating unit (G-X-Y) are hydroxylated in some or all of the chains. In terms of processing, contains 3-hydroxyproline at a few sites. This modification occurs on the first proline residue in the sequence motif Gly-Pro-Hyp, where Hyp is 4-hydroxyproline. Post-translationally, lysine residues at the third position of the tripeptide repeating unit (G-X-Y) are 5-hydroxylated in some or all of the chains. O-glycosylated on hydroxylated lysine residues. The O-linked glycan consists of a Glc-Gal disaccharide. In terms of tissue distribution, forms the fibrils of tendon, ligaments and bones. In bones the fibrils are mineralized with calcium hydroxyapatite.

It localises to the secreted. Its subcellular location is the extracellular space. It is found in the extracellular matrix. Type I collagen is a member of group I collagen (fibrillar forming collagen). The protein is Collagen alpha-1(I) chain of Mus musculus (Mouse).